The following is a 184-amino-acid chain: Large ribosomal subunit protein uL22A (184 aa).

A Glycyl lysine isopeptide (Lys-Gly) (interchain with G-Cter in ubiquitin) cross-link involves residue K46. T70 is subject to Phosphothreonine.

This sequence belongs to the universal ribosomal protein uL22 family. As to quaternary structure, component of the large ribosomal subunit (LSU). Mature yeast ribosomes consist of a small (40S) and a large (60S) subunit. The 40S small subunit contains 1 molecule of ribosomal RNA (18S rRNA) and 33 different proteins (encoded by 57 genes). The large 60S subunit contains 3 rRNA molecules (25S, 5.8S and 5S rRNA) and 46 different proteins (encoded by 81 genes). uL22 is associated with the polypeptide exit tunnel.

The protein resides in the cytoplasm. Its function is as follows. Component of the ribosome, a large ribonucleoprotein complex responsible for the synthesis of proteins in the cell. The small ribosomal subunit (SSU) binds messenger RNAs (mRNAs) and translates the encoded message by selecting cognate aminoacyl-transfer RNA (tRNA) molecules. The large subunit (LSU) contains the ribosomal catalytic site termed the peptidyl transferase center (PTC), which catalyzes the formation of peptide bonds, thereby polymerizing the amino acids delivered by tRNAs into a polypeptide chain. The nascent polypeptides leave the ribosome through a tunnel in the LSU and interact with protein factors that function in enzymatic processing, targeting, and the membrane insertion of nascent chains at the exit of the ribosomal tunnel. This is Large ribosomal subunit protein uL22A from Saccharomyces cerevisiae (strain ATCC 204508 / S288c) (Baker's yeast).